Here is a 1353-residue protein sequence, read N- to C-terminus: Tenascin-R (1353 aa).

A signal peptide spans 1–33 (MGTDSENPVLRNVLISFNLLLLGAVLKPFECRL). Residues 132-156 (SLQELLSRIEMLEREVSMLRDQCNS) are a coiled coil. N-linked (GlcNAc...) asparagine glycans are attached at residues N179 and N197. 4 EGF-like domains span residues 187–198 (CICSEGWAGSNC), 234–260 (CPAG…GEDC), 265–291 (CPRD…GEDC), and 292–323 (GWLR…QDCS). The N-linked (GlcNAc...) asparagine glycan is linked to N277. 2 disulfide bridges follow: C296–C306 and C313–C322. Fibronectin type-III domains follow at residues 327–419 (PPEN…TPQG), 420–504 (LKFK…TLID), 505–594 (GPTQ…TEID), 595–686 (APKN…TELD), 687–776 (SPRD…VRPI), 777–863 (TQLH…TGMD), 864–952 (APKD…AMDA), 953–1037 (PLGV…TLLD), and 1038–1126 (PPTN…GGRV). Residues N391, N469, and N580 are each glycosylated (N-linked (GlcNAc...) asparagine). N734, N790, N872, N1031, N1041, N1256, and N1342 each carry an N-linked (GlcNAc...) asparagine glycan. The region spanning 1124-1339 (GRVFANPQDC…FVEMKMRPYN (216 aa)) is the Fibrinogen C-terminal domain.

This sequence belongs to the tenascin family. Forms homodimers and homotrimers. Interacts with CNTN1, NFASC and CSPG5. In terms of tissue distribution, brain specific.

It localises to the secreted. Its subcellular location is the extracellular space. The protein localises to the extracellular matrix. In terms of biological role, neural extracellular matrix (ECM) protein involved in interactions with different cells and matrix components. Involved in cell attachment and neurite formation. Interaction with CNTN1 enhances the neurite outgrowth. In Gallus gallus (Chicken), this protein is Tenascin-R (TNR).